The chain runs to 326 residues: Deoxyuridine 5'-triphosphate nucleotidohydrolase (326 aa).

Substrate-binding positions include 218–220 and 321–322; these read RSS and FG.

The protein belongs to the dUTPase family. The cofactor is Mg(2+).

The enzyme catalyses dUTP + H2O = dUMP + diphosphate + H(+). Its function is as follows. Involved in nucleotide metabolism: produces dUMP, the immediate precursor of thymidine nucleotides and decreases the intracellular concentration of dUTP to avoid uracil incorporation into viral DNA. The chain is Deoxyuridine 5'-triphosphate nucleotidohydrolase from Equus caballus (Horse).